The following is a 469-amino-acid chain: D-3-phosphoglycerate dehydrogenase 2 (469 aa).

S2 carries the N-acetylserine modification. A phosphoserine mark is found at S22, S29, and S33. NAD(+)-binding positions include 208–209 (HI), D228, 285–287 (ASR), and D311. The active site involves R287. Residue E316 is part of the active site. Catalysis depends on H347, which acts as the Proton donor. Position 347-350 (347-350 (HIGG)) interacts with NAD(+). The region spanning 399–469 (RVLYIHRNVP…SAKVSIRLLY (71 aa)) is the ACT domain.

This sequence belongs to the D-isomer specific 2-hydroxyacid dehydrogenase family.

The catalysed reaction is (2R)-3-phosphoglycerate + NAD(+) = 3-phosphooxypyruvate + NADH + H(+). The enzyme catalyses (R)-2-hydroxyglutarate + NAD(+) = 2-oxoglutarate + NADH + H(+). The protein operates within amino-acid biosynthesis; L-serine biosynthesis; L-serine from 3-phospho-D-glycerate: step 1/3. Its function is as follows. Catalyzes the reversible oxidation of 3-phospho-D-glycerate to 3-phosphonooxypyruvate, the first step of the phosphorylated L-serine biosynthesis pathway. Also catalyzes the reversible oxidation of 2-hydroxyglutarate to 2-oxoglutarate. The sequence is that of D-3-phosphoglycerate dehydrogenase 2 (SER33) from Saccharomyces cerevisiae (strain ATCC 204508 / S288c) (Baker's yeast).